Consider the following 183-residue polypeptide: NEDD8-conjugating enzyme Ubc12 (183 aa).

Met-1 bears the N-acetylmethionine mark. A disordered region spans residues 1–28 (MIKLFSLKQQKKEEESAGGTKGSSKKAS). Positions 29–173 (AAQLRIQKDI…VQRSMRGGYI (145 aa)) constitute a UBC core domain. Residue Cys-111 is the Glycyl thioester intermediate of the active site.

The protein belongs to the ubiquitin-conjugating enzyme family. UBC12 subfamily. In terms of processing, the acetylation of Met-1 increases affinity for DCUN1D1 by about 2 orders of magnitude and is crucial for NEDD8 transfer to cullins.

It catalyses the reaction [E1 NEDD8-activating enzyme]-S-[NEDD8 protein]-yl-L-cysteine + [E2 NEDD8-conjugating enzyme]-L-cysteine = [E1 NEDD8-activating enzyme]-L-cysteine + [E2 NEDD8-conjugating enzyme]-S-[NEDD8-protein]-yl-L-cysteine.. Its pathway is protein modification; protein neddylation. Functionally, accepts the ubiquitin-like protein NEDD8 from the UBA3-NAE1 E1 complex and catalyzes its covalent attachment to other proteins. The specific interaction with the E3 ubiquitin ligase rbx1, but not rbx2, suggests that the rbx1-ube2m complex neddylates specific target proteins, such as cul1, cul2, cul3 and cul4. Involved in cell proliferation. This chain is NEDD8-conjugating enzyme Ubc12 (ube2m), found in Xenopus laevis (African clawed frog).